Here is a 634-residue protein sequence, read N- to C-terminus: Nucleoside triphosphatase I (634 aa).

The 163-residue stretch at 41–203 (FLGLDSMNSL…ALLVNLLRPG (163 aa)) folds into the Helicase ATP-binding domain. 54-61 (QETGVGKT) serves as a coordination point for ATP. The DEXH box signature appears at 140–143 (DECH). The Helicase C-terminal domain maps to 355-531 (SLYQALYEHS…EFSQLYRVLK (177 aa)). The binding to the cap-specific mRNA (nucleoside-2'-O-)-methyltransferase stretch occupies residues 456–523 (DIFILDMTWN…EIIQNKAREF (68 aa)).

This sequence belongs to the helicase family. NPH I subfamily. Monomer. Interacts (via C-terminus) with RAP94 (via N-terminus). Interacts with the cap-specific mRNA (nucleoside-2'-O-)-methyltransferase.

The protein resides in the virion. The enzyme catalyses a ribonucleoside 5'-triphosphate + H2O = a ribonucleoside 5'-diphosphate + phosphate + H(+). In terms of biological role, DNA-dependent ATPase required for providing the needed energy to achieve the termination of early transcripts. Acts in concert with the RAP94 subunit of the virion RNA polymerase and the capping enzyme/VTF to catalyze release of UUUUUNU-containing nascent RNA from the elongation complex. NPH-I must bind ssDNA in order to exhibit ATPase activity. This Homo sapiens (Human) protein is Nucleoside triphosphatase I (NPH1).